Reading from the N-terminus, the 379-residue chain is GDSL esterase/lipase EXL2 (379 aa).

An N-terminal signal peptide occupies residues 1–35; it reads MKRNSINIHHVTSFSSSPFWCVFFLVLLCKTSTNA. A glycan (N-linked (GlcNAc...) asparagine) is linked at Asn42. Ser54 acts as the Nucleophile in catalysis. Active-site residues include Asp358 and His361.

The protein belongs to the 'GDSL' lipolytic enzyme family.

It localises to the secreted. The polypeptide is GDSL esterase/lipase EXL2 (EXL2) (Arabidopsis thaliana (Mouse-ear cress)).